Consider the following 154-residue polypeptide: Transcriptional repressor NrdR (154 aa).

The segment at 3–34 is a zinc-finger region; the sequence is CPFCGANDTKVIDSRLVAEGEQVRRRRECLAC. Residues 49 to 139 form the ATP-cone domain; the sequence is PRLIKTDGSR…VYRRFQDLNE (91 aa).

This sequence belongs to the NrdR family. Zn(2+) serves as cofactor.

Functionally, negatively regulates transcription of bacterial ribonucleotide reductase nrd genes and operons by binding to NrdR-boxes. This chain is Transcriptional repressor NrdR, found in Pseudomonas fluorescens (strain Pf0-1).